Reading from the N-terminus, the 269-residue chain is Putative pyruvate, phosphate dikinase regulatory protein (269 aa).

147–154 (GLSRTSKT) is a binding site for ADP.

It belongs to the pyruvate, phosphate/water dikinase regulatory protein family. PDRP subfamily.

The enzyme catalyses N(tele)-phospho-L-histidyl/L-threonyl-[pyruvate, phosphate dikinase] + ADP = N(tele)-phospho-L-histidyl/O-phospho-L-threonyl-[pyruvate, phosphate dikinase] + AMP + H(+). The catalysed reaction is N(tele)-phospho-L-histidyl/O-phospho-L-threonyl-[pyruvate, phosphate dikinase] + phosphate + H(+) = N(tele)-phospho-L-histidyl/L-threonyl-[pyruvate, phosphate dikinase] + diphosphate. In terms of biological role, bifunctional serine/threonine kinase and phosphorylase involved in the regulation of the pyruvate, phosphate dikinase (PPDK) by catalyzing its phosphorylation/dephosphorylation. This Clostridium botulinum (strain ATCC 19397 / Type A) protein is Putative pyruvate, phosphate dikinase regulatory protein.